A 132-amino-acid polypeptide reads, in one-letter code: Small ribosomal subunit protein uS8 (132 aa).

The protein belongs to the universal ribosomal protein uS8 family. As to quaternary structure, part of the 30S ribosomal subunit. Contacts proteins S5 and S12.

Its function is as follows. One of the primary rRNA binding proteins, it binds directly to 16S rRNA central domain where it helps coordinate assembly of the platform of the 30S subunit. This chain is Small ribosomal subunit protein uS8, found in Anaeromyxobacter dehalogenans (strain 2CP-C).